Consider the following 198-residue polypeptide: Recombination protein RecR (198 aa).

Residues 57 to 72 (CTVCGHITDTDPCYIC) form a C4-type zinc finger. The region spanning 80-175 (TTICVVQDPK…KVTRIAHGLP (96 aa)) is the Toprim domain.

Belongs to the RecR family.

Its function is as follows. May play a role in DNA repair. It seems to be involved in an RecBC-independent recombinational process of DNA repair. It may act with RecF and RecO. This is Recombination protein RecR from Geobacillus sp. (strain WCH70).